A 60-amino-acid polypeptide reads, in one-letter code: Large ribosomal subunit protein bL32 (60 aa).

This sequence belongs to the bacterial ribosomal protein bL32 family.

The chain is Large ribosomal subunit protein bL32 from Hydrogenobaculum sp. (strain Y04AAS1).